The chain runs to 433 residues: Glutamate-1-semialdehyde 2,1-aminomutase (433 aa).

Lysine 266 carries the N6-(pyridoxal phosphate)lysine modification.

It belongs to the class-III pyridoxal-phosphate-dependent aminotransferase family. HemL subfamily. Homodimer. Requires pyridoxal 5'-phosphate as cofactor.

Its subcellular location is the cytoplasm. It carries out the reaction (S)-4-amino-5-oxopentanoate = 5-aminolevulinate. It participates in porphyrin-containing compound metabolism; protoporphyrin-IX biosynthesis; 5-aminolevulinate from L-glutamyl-tRNA(Glu): step 2/2. The protein is Glutamate-1-semialdehyde 2,1-aminomutase of Psychrobacter cryohalolentis (strain ATCC BAA-1226 / DSM 17306 / VKM B-2378 / K5).